We begin with the raw amino-acid sequence, 334 residues long: Holliday junction branch migration complex subunit RuvB (334 aa).

The large ATPase domain (RuvB-L) stretch occupies residues 1 to 182 (MDDRMIDGEL…FGVLSRLEYY (182 aa)). ATP-binding positions include Leu-21, Arg-22, Gly-63, Lys-66, Thr-67, Thr-68, 129–131 (EDF), Arg-172, Tyr-182, and Arg-219. Residue Thr-67 participates in Mg(2+) binding. Residues 183–253 (EIKDLCNIVE…STKQALEMLQ (71 aa)) form a small ATPAse domain (RuvB-S) region. Residues 256 to 334 (DAGLDHVDHK…HLGIKRTGED (79 aa)) form a head domain (RuvB-H) region. DNA-binding residues include Arg-311 and Arg-316.

It belongs to the RuvB family. Homohexamer. Forms an RuvA(8)-RuvB(12)-Holliday junction (HJ) complex. HJ DNA is sandwiched between 2 RuvA tetramers; dsDNA enters through RuvA and exits via RuvB. An RuvB hexamer assembles on each DNA strand where it exits the tetramer. Each RuvB hexamer is contacted by two RuvA subunits (via domain III) on 2 adjacent RuvB subunits; this complex drives branch migration. In the full resolvosome a probable DNA-RuvA(4)-RuvB(12)-RuvC(2) complex forms which resolves the HJ.

The protein resides in the cytoplasm. It catalyses the reaction ATP + H2O = ADP + phosphate + H(+). In terms of biological role, the RuvA-RuvB-RuvC complex processes Holliday junction (HJ) DNA during genetic recombination and DNA repair, while the RuvA-RuvB complex plays an important role in the rescue of blocked DNA replication forks via replication fork reversal (RFR). RuvA specifically binds to HJ cruciform DNA, conferring on it an open structure. The RuvB hexamer acts as an ATP-dependent pump, pulling dsDNA into and through the RuvAB complex. RuvB forms 2 homohexamers on either side of HJ DNA bound by 1 or 2 RuvA tetramers; 4 subunits per hexamer contact DNA at a time. Coordinated motions by a converter formed by DNA-disengaged RuvB subunits stimulates ATP hydrolysis and nucleotide exchange. Immobilization of the converter enables RuvB to convert the ATP-contained energy into a lever motion, pulling 2 nucleotides of DNA out of the RuvA tetramer per ATP hydrolyzed, thus driving DNA branch migration. The RuvB motors rotate together with the DNA substrate, which together with the progressing nucleotide cycle form the mechanistic basis for DNA recombination by continuous HJ branch migration. Branch migration allows RuvC to scan DNA until it finds its consensus sequence, where it cleaves and resolves cruciform DNA. This is Holliday junction branch migration complex subunit RuvB from Oceanobacillus iheyensis (strain DSM 14371 / CIP 107618 / JCM 11309 / KCTC 3954 / HTE831).